Reading from the N-terminus, the 209-residue chain is Large ribosomal subunit protein uL3 (209 aa).

The disordered stretch occupies residues 119-145; sequence AIKRHGQSRGPMSHGSHFHRAPGSVGM.

Belongs to the universal ribosomal protein uL3 family. As to quaternary structure, part of the 50S ribosomal subunit. Forms a cluster with proteins L14 and L19.

Functionally, one of the primary rRNA binding proteins, it binds directly near the 3'-end of the 23S rRNA, where it nucleates assembly of the 50S subunit. The sequence is that of Large ribosomal subunit protein uL3 from Staphylococcus aureus (strain COL).